The following is a 291-amino-acid chain: Phosphatidylglycerol--prolipoprotein diacylglyceryl transferase (291 aa).

4 helical membrane passes run Trp-24–Leu-44, Phe-64–Tyr-84, Ile-99–Leu-119, and Gly-125–Leu-145. Arg-147 is an a 1,2-diacyl-sn-glycero-3-phospho-(1'-sn-glycerol) binding site. 3 helical membrane passes run Ala-187–Leu-207, Gly-211–Phe-231, and Met-247–Trp-267.

It belongs to the Lgt family.

It localises to the cell inner membrane. The enzyme catalyses L-cysteinyl-[prolipoprotein] + a 1,2-diacyl-sn-glycero-3-phospho-(1'-sn-glycerol) = an S-1,2-diacyl-sn-glyceryl-L-cysteinyl-[prolipoprotein] + sn-glycerol 1-phosphate + H(+). It participates in protein modification; lipoprotein biosynthesis (diacylglyceryl transfer). Catalyzes the transfer of the diacylglyceryl group from phosphatidylglycerol to the sulfhydryl group of the N-terminal cysteine of a prolipoprotein, the first step in the formation of mature lipoproteins. The sequence is that of Phosphatidylglycerol--prolipoprotein diacylglyceryl transferase from Nitrobacter hamburgensis (strain DSM 10229 / NCIMB 13809 / X14).